We begin with the raw amino-acid sequence, 209 residues long: uncharacterized protein (209 aa).

6 consecutive 4Fe-4S ferredoxin-type domains span residues 38–67, 63–92, 90–119, 122–151, 145–174, and 179–209; these read KTKP…IFSF, KIFS…KDRF, DRFT…KEIP, KTPV…EINP, INKE…TPDE, and LIVK…HRES. [4Fe-4S] cluster is bound by residues Cys-47, Cys-50, Cys-53, Cys-57, Cys-72, Cys-75, Cys-78, Cys-82, Cys-99, Cys-102, Cys-105, and Cys-109. Positions 154, 157, 160, 164, 188, 191, 194, and 198 each coordinate [4Fe-4S] cluster.

This is an uncharacterized protein from Methanocaldococcus jannaschii (strain ATCC 43067 / DSM 2661 / JAL-1 / JCM 10045 / NBRC 100440) (Methanococcus jannaschii).